Here is a 385-residue protein sequence, read N- to C-terminus: Tumor protein p53-inducible protein 13 (385 aa).

Positions 1 to 27 (MVHPPPPPPRLLLVALVGLLSLREVVA) are cleaved as a signal peptide. The Extracellular portion of the chain corresponds to 28–301 (EPAEEAGTPC…ARGPTPRTEE (274 aa)). Positions 242–297 (APVSLTTGGPGGNGRSRTEAQMPSGQGNHGGCACPGQVSPAPRAAGPPRVARGPTP) are disordered. The span at 281-297 (PAPRAAGPPRVARGPTP) shows a compositional bias: low complexity. A helical transmembrane segment spans residues 302-322 (AAWAAMALTFLLVLLTLATLC). Residues 323–385 (TRLHRNFRRS…DSGPDSESSD (63 aa)) are Cytoplasmic-facing. The segment covering 359 to 369 (SRRIKRSRRRP) has biased composition (basic residues). The disordered stretch occupies residues 359–385 (SRRIKRSRRRPLLPPTPDSGPDSESSD).

The protein localises to the cell membrane. It localises to the cytoplasm. In terms of biological role, may act as a tumor suppressor. Inhibits tumor cell growth, when overexpressed. The sequence is that of Tumor protein p53-inducible protein 13 (Tp53i13) from Mus musculus (Mouse).